Consider the following 215-residue polypeptide: Peroxiredoxin (215 aa).

Residues 6 to 161 (PLIGEEFPRV…ILRAVKALQT (156 aa)) form the Thioredoxin domain. Cys-48 (cysteine sulfenic acid (-SOH) intermediate) is an active-site residue. Arg-124 serves as a coordination point for substrate. Cys-205 and Cys-211 are joined by a disulfide.

Belongs to the peroxiredoxin family. Prx6 subfamily. In terms of assembly, homodecamer. Pentamer of dimers that assemble into a ring structure.

The protein localises to the cytoplasm. It carries out the reaction a hydroperoxide + [thioredoxin]-dithiol = an alcohol + [thioredoxin]-disulfide + H2O. Thiol-specific peroxidase that catalyzes the reduction of hydrogen peroxide and organic hydroperoxides to water and alcohols, respectively. Plays a role in cell protection against oxidative stress by detoxifying peroxides. The sequence is that of Peroxiredoxin from Thermotoga maritima (strain ATCC 43589 / DSM 3109 / JCM 10099 / NBRC 100826 / MSB8).